The following is a 367-amino-acid chain: F-box only protein 25 (367 aa).

Residues 1 to 83 form an interaction with beta-actin region; it reads MPFLGQDWRS…NDTNTQSFYR (83 aa). The F-box domain occupies 226–274; the sequence is LTLSDLPLHMLNNILYRFSDGWDIITLGQVTPTLYMLSEDRQLWKKLCQ.

In terms of assembly, part of a SCF (SKP1-cullin-F-box) protein ligase complex consisting of FBXO25, SKP1, CUL1 and RBX1. Interacts directly with SKP1 and CUL1. Interacts (via C-terminus) with beta-actin (via N-terminus). As to expression, expressed in all brain tissue observed.

It is found in the nucleus. It participates in protein modification; protein ubiquitination. Functionally, substrate-recognition component of the SCF (SKP1-CUL1-F-box protein)-type E3 ubiquitin ligase complex. May play a role in accumulation of expanded polyglutamine (polyQ) protein huntingtin (HTT). In Homo sapiens (Human), this protein is F-box only protein 25 (FBXO25).